A 374-amino-acid polypeptide reads, in one-letter code: Speckle-type POZ protein (374 aa).

The region spanning 31 to 161 (KFSYMWTINN…DDKLTLFCEV (131 aa)) is the MATH domain. The interval 71–191 (VNPKGLDEES…PDCRLADELG (121 aa)) is required for nuclear localization. The 125-residue stretch at 173–297 (QNTMNMVKVP…MCEDALCTSL (125 aa)) folds into the BTB domain. The segment at 297–355 (LSVENAAEILILADLHSADQLKTQAVDFINYHASDVMETSGWKSMVASHPHLVAEAYRS) is homodimerization.

Belongs to the Tdpoz family. Homodimer. Part of cullin-RING-based BCR (BTB-CUL3-RBX1) E3 ubiquitin-protein ligase complexes that contain CUL3 and SPOP, plus a target protein.

The protein localises to the nucleus. The protein resides in the nucleus speckle. It participates in protein modification; protein ubiquitination. Its function is as follows. Component of a cullin-RING-based BCR (BTB-CUL3-RBX1) E3 ubiquitin-protein ligase complex that mediates the ubiquitination of target proteins, leading most often to their proteasomal degradation. In Danio rerio (Zebrafish), this protein is Speckle-type POZ protein (spop).